The sequence spans 51 residues: uncharacterized protein (51 aa).

A disordered region spans residues M1–Q28. Residues S13–Q47 adopt a coiled-coil conformation.

This is an uncharacterized protein from Dictyostelium discoideum (Social amoeba).